Here is a 73-residue protein sequence, read N- to C-terminus: Putative membrane protein insertion efficiency factor (73 aa).

This sequence belongs to the UPF0161 family.

The protein resides in the cell inner membrane. Functionally, could be involved in insertion of integral membrane proteins into the membrane. In Parabacteroides distasonis (strain ATCC 8503 / DSM 20701 / CIP 104284 / JCM 5825 / NCTC 11152), this protein is Putative membrane protein insertion efficiency factor.